A 428-amino-acid polypeptide reads, in one-letter code: Dihydroorotase (428 aa).

Residues H61 and H63 each contribute to the Zn(2+) site. Substrate-binding positions include 63–65 (HLR) and N95. D153, H180, and H233 together coordinate Zn(2+). A substrate-binding site is contributed by N279. A Zn(2+)-binding site is contributed by D306. Residue D306 is part of the active site. Substrate is bound by residues H310 and 324–325 (FG).

It belongs to the metallo-dependent hydrolases superfamily. DHOase family. Class I DHOase subfamily. Zn(2+) serves as cofactor.

The catalysed reaction is (S)-dihydroorotate + H2O = N-carbamoyl-L-aspartate + H(+). It functions in the pathway pyrimidine metabolism; UMP biosynthesis via de novo pathway; (S)-dihydroorotate from bicarbonate: step 3/3. Functionally, catalyzes the reversible cyclization of carbamoyl aspartate to dihydroorotate. In Geobacillus kaustophilus (strain HTA426), this protein is Dihydroorotase.